A 165-amino-acid polypeptide reads, in one-letter code: 16S rRNA aminocarboxypropyltransferase (165 aa).

The S-adenosyl-L-methionine site is built by Thr17, Leu62, Leu83, and Thr102.

The protein belongs to the TDD superfamily. TSR3 family.

Its subcellular location is the cytoplasm. The enzyme catalyses an N(1)-methylpseudouridine in rRNA + S-adenosyl-L-methionine = N(1)-methyl-N(3)-[(3S)-3-amino-3-carboxypropyl]pseudouridine in rRNA + S-methyl-5'-thioadenosine + H(+). Its function is as follows. Aminocarboxypropyltransferase that catalyzes the aminocarboxypropyl transfer on pseudouridine corresponding to position 914 in M.jannaschii 16S rRNA. It constitutes the last step in biosynthesis of the hypermodified N1-methyl-N3-(3-amino-3-carboxypropyl) pseudouridine (m1acp3-Psi). The protein is 16S rRNA aminocarboxypropyltransferase of Halobacterium salinarum (strain ATCC 700922 / JCM 11081 / NRC-1) (Halobacterium halobium).